The chain runs to 1302 residues: Multidrug resistance protein homolog 65 (1302 aa).

Residues 1–23 (MERDEVSTSSSEGKSQEEAPMAE) form a disordered region. The Cytoplasmic portion of the chain corresponds to 1-48 (MERDEVSTSSSEGKSQEEAPMAEGLEPTEPIAFLKLFRFSTYGEIGWL). Residues 48–369 (LFFGFIMCCI…TAPFLESFAT (322 aa)) form the ABC transmembrane type-1 1 domain. A helical membrane pass occupies residues 49-69 (FFGFIMCCIKALTLPAVVIIY). The Extracellular portion of the chain corresponds to 70–118 (SEFTSMLVDRAMQFGTSSNVHALPLFGGGKTLTNASREENNEALYDDSI). An N-linked (GlcNAc...) asparagine glycan is attached at asparagine 103. A helical transmembrane segment spans residues 119-147 (SYGILLTIASVVMFISGIFSVDVFNMVAL). Residues 148–194 (RQVTRMRIKLFSSVIRQDIGWHDLASKQNFTQSMVDDVEKIRDGISE) lie on the Cytoplasmic side of the membrane. A helical membrane pass occupies residues 195-215 (KVGHFVYLVVGFIITVAISFS). Over 216 to 223 (YGWKLTLA) the chain is Extracellular. A helical membrane pass occupies residues 224-242 (VSSYIPLVILLNYYVAKFQ). At 243-302 (GKLTAREQESYAGAGNLAEEILSSIRTVVSFGGEKSEVQRYENFLVPARKASQWKGAFSG) the chain is on the cytoplasmic side. A helical transmembrane segment spans residues 303-323 (LSDAVLKSMLYLSCAGAFWYG). Over 324–341 (VNLIIDDRNVENKEYTPA) the chain is Extracellular. The helical transmembrane segment at 342 to 362 (ILMIAFFGIIVGADNIARTAP) threads the bilayer. The Cytoplasmic segment spans residues 363–731 (FLESFATARG…LQLAKQEWCY (369 aa)). The region spanning 405–641 (VEFQDVFFRY…EGAYYNMVRA (237 aa)) is the ABC transporter 1 domain. 440–447 (GSSGCGKS) is a binding site for ATP. A helical membrane pass occupies residues 732–753 (LILGTISAVAVGFLYPAFAVIF). The 289-residue stretch at 732 to 1020 (LILGTISAVA…SLAFTPAFSA (289 aa)) folds into the ABC transmembrane type-1 2 domain. Residues 754-776 (GEFYAALAEKDPEDALRRTAVLS) lie on the Extracellular side of the membrane. A helical transmembrane segment spans residues 777 to 798 (WACLGLAFLTGLVCFLQTYLFN). Residues 799–852 (YAGIWLTTRMRAMTFNAMVNQEVGWFDDENNSVGALSARLSGEAVDIQGAIGYP) lie on the Cytoplasmic side of the membrane. A helical membrane pass occupies residues 853-873 (LSGMIQALSNFISSVSVAMYY). Position 874 (asparagine 874) is a topological domain, extracellular. Residues 875-894 (WKLALLCLANCPIIVGSVIL) traverse the membrane as a helical segment. The Cytoplasmic portion of the chain corresponds to 895–956 (EAKMMSNAVV…VEVLIRQKLR (62 aa)). A helical transmembrane segment spans residues 957-977 (WRGVLNSTMQASAFFAYAVAL). Topologically, residues 978–993 (CYGGVLVSEGQLPFQD) are extracellular. The chain crosses the membrane as a helical span at residues 994-1014 (IIKVSETLLYGSMMLAQSLAF). Residues 1015 to 1302 (TPAFSAALIA…AKLHKTQKDH (288 aa)) are Cytoplasmic-facing. Residues 1059–1298 (VRYRGIQFRY…GGIYAKLHKT (240 aa)) enclose the ABC transporter 2 domain. Residue 1094–1101 (GHSGCGKS) participates in ATP binding.

This sequence belongs to the ABC transporter superfamily. ABCB family. Multidrug resistance exporter (TC 3.A.1.201) subfamily.

It localises to the membrane. The catalysed reaction is ATP + H2O + xenobioticSide 1 = ADP + phosphate + xenobioticSide 2.. The chain is Multidrug resistance protein homolog 65 (Mdr65) from Drosophila melanogaster (Fruit fly).